A 251-amino-acid polypeptide reads, in one-letter code: Metallo-beta-lactamase domain-containing protein 1 (251 aa).

Zn(2+) is bound by residues His-118, His-120, Asp-122, His-123, His-173, Asp-196, and His-235.

The protein belongs to the metallo-beta-lactamase superfamily. Glyoxalase II family. As to quaternary structure, homodimer. It depends on Zn(2+) as a cofactor.

The protein localises to the cytoplasm. It is found in the cytosol. The protein resides in the nucleus. The catalysed reaction is a ribonucleotidyl-ribonucleotide-RNA + H2O = a 3'-end ribonucleotide-RNA + a 5'-end 5'-phospho-ribonucleoside-RNA + H(+). Functionally, endoribonuclease that catalyzes the hydrolysis of histone-coding pre-mRNA 3'-end. Involved in histone pre-mRNA processing during the S-phase of the cell cycle, which is required for entering/progressing through S-phase. Cleaves histone pre-mRNA at a major and a minor cleavage site after the 5'-ACCCA-3' and the 5'-ACCCACA-3' sequence, respectively, and located downstream of the stem-loop. May require the presence of the HDE element located at the histone pre-RNA 3'-end to avoid non-specific cleavage. This chain is Metallo-beta-lactamase domain-containing protein 1 (Mblac1), found in Rattus norvegicus (Rat).